Consider the following 252-residue polypeptide: Trans-aconitate 2-methyltransferase (252 aa).

The protein belongs to the methyltransferase superfamily. Tam family.

The protein resides in the cytoplasm. The enzyme catalyses trans-aconitate + S-adenosyl-L-methionine = (E)-3-(methoxycarbonyl)pent-2-enedioate + S-adenosyl-L-homocysteine. In terms of biological role, catalyzes the S-adenosylmethionine monomethyl esterification of trans-aconitate. The sequence is that of Trans-aconitate 2-methyltransferase from Escherichia coli O6:K15:H31 (strain 536 / UPEC).